The sequence spans 588 residues: Zinc finger protein 599 (588 aa).

Residues 9 to 80 (VSFEDVVVTF…KRGLSQSTCA (72 aa)) form the KRAB domain. C2H2-type zinc fingers lie at residues 199–221 (YTCT…QQIH), 227–249 (YECN…MRLH), 255–277 (YKCI…QRIH), 283–305 (YECK…NMTH), 311–333 (FLCK…MRIH), 339–361 (YECG…NVTH), 367–389 (FLCK…MRIH), 395–417 (YECG…KRTH), 423–445 (FECK…MRIH), 451–473 (YECS…NRTH), 479–501 (LECK…MRIH), 507–529 (YVCR…NRIH), 535–557 (FECK…MRTH), and 563–585 (FECN…RKIH).

Belongs to the krueppel C2H2-type zinc-finger protein family.

It localises to the nucleus. Functionally, may be involved in transcriptional regulation. The polypeptide is Zinc finger protein 599 (ZNF599) (Homo sapiens (Human)).